A 596-amino-acid chain; its full sequence is Chaperone protein DnaK (596 aa).

The residue at position 180 (threonine 180) is a Phosphothreonine; by autocatalysis.

The protein belongs to the heat shock protein 70 family.

Its function is as follows. Acts as a chaperone. In Thermosipho melanesiensis (strain DSM 12029 / CIP 104789 / BI429), this protein is Chaperone protein DnaK.